Consider the following 37-residue polypeptide: uncharacterized protein (37 aa).

A helical transmembrane segment spans residues 1–21; the sequence is MQDLEIFLSIFAFIFVFYFGA.

The protein localises to the endoplasmic reticulum membrane. This is an uncharacterized protein from Saccharomyces cerevisiae (strain ATCC 204508 / S288c) (Baker's yeast).